The primary structure comprises 240 residues: Insulin-like growth factor-binding protein 3 receptor (240 aa).

Residues 1 to 38 form the signal peptide; that stretch reads MGSCQAGHNLHLCLAHHPPLVCATLILLLLGLSGLGLG. Over 39–204 the chain is Extracellular; it reads GFLLTHTTGL…SEELALCGSR (166 aa). Asparagine 167 carries an N-linked (GlcNAc...) asparagine glycan. The chain crosses the membrane as a helical span at residues 205 to 225; the sequence is VLGLGFFLVLLCGLLCCTTAV. Topologically, residues 226-240 are cytoplasmic; it reads CFHPRPEFHWSRTRL.

As to quaternary structure, interacts with IGFBP3. Interacts with CASP8.

The protein localises to the cell membrane. Functionally, cell death receptor specific for IGFBP3, may mediate caspase-8-dependent apoptosis upon ligand binding. The sequence is that of Insulin-like growth factor-binding protein 3 receptor (Tmem219) from Mus musculus (Mouse).